Reading from the N-terminus, the 322-residue chain is NADH-quinone oxidoreductase subunit H (322 aa).

The next 8 membrane-spanning stretches (helical) occupy residues 14-34 (IFMH…YMSF), 81-101 (YIFV…IPVI), 114-134 (VGVL…LLAG), 149-169 (SIAQ…GIVA), 186-206 (LWNI…GMAL), 237-257 (FFIS…TLFF), 265-285 (FPPV…FVLI), and 302-322 (WKFL…YILI).

It belongs to the complex I subunit 1 family. NDH-1 is composed of 13 different subunits. Subunits NuoA, H, J, K, L, M, N constitute the membrane sector of the complex.

Its subcellular location is the cell inner membrane. The catalysed reaction is a quinone + NADH + 5 H(+)(in) = a quinol + NAD(+) + 4 H(+)(out). Its function is as follows. NDH-1 shuttles electrons from NADH, via FMN and iron-sulfur (Fe-S) centers, to quinones in the respiratory chain. The immediate electron acceptor for the enzyme in this species is believed to be ubiquinone. Couples the redox reaction to proton translocation (for every two electrons transferred, four hydrogen ions are translocated across the cytoplasmic membrane), and thus conserves the redox energy in a proton gradient. This subunit may bind ubiquinone. In Blochmanniella floridana, this protein is NADH-quinone oxidoreductase subunit H.